The primary structure comprises 662 residues: Fusion glycoprotein F0 (662 aa).

Residues 1 to 73 are disordered; that stretch reads MHRGIPKSSK…TRSRKQTSHR (73 aa). An N-terminal signal peptide occupies residues 1 to 135; the sequence is MHRGIPKSSK…MASLFLCSKA (135 aa). Residues 8-19 show a composition bias toward polar residues; it reads SSKTQTHTQQDR. The segment covering 64 to 73 has biased composition (basic residues); that stretch reads TRSRKQTSHR. At 136 to 608 the chain is on the extracellular side; it reads QIHWDNLSTI…VRRSSFNFGS (473 aa). Asn-141, Asn-173, and Asn-179 each carry an N-linked (GlcNAc...) asparagine; by host glycan. Residues 225 to 249 form a fusion peptide region; it reads FAGVVLAGVALGVATAAQITAGIAL. Residues 250–278 adopt a coiled-coil conformation; that stretch reads HQSNLNAQAIQSLRTSLEQSNKAIEEIRE. 4 cysteine pairs are disulfide-bonded: Cys-446–Cys-455, Cys-470–Cys-478, Cys-502–Cys-507, and Cys-509–Cys-532. A coiled-coil region spans residues 574–599; that stretch reads NLGNALKKLDDAKVLIDSSNQILETV. The helical transmembrane segment at 609-629 threads the bilayer; sequence LLSVPILSCTALALLLLIYCC. At 630 to 662 the chain is on the cytoplasmic side; that stretch reads KRRYQQTLKQHTKVDPAFKPDLTGTSKSYVRSL.

The protein belongs to the paramyxoviruses fusion glycoprotein family. Homotrimer of disulfide-linked F1-F2. The inactive precursor F0 is glycosylated and proteolytically cleaved into F1 and F2 to be functionally active. The cleavage is mediated by cellular proteases during the transport and maturation of the polypeptide.

The protein resides in the virion membrane. It localises to the host cell membrane. Class I viral fusion protein. Under the current model, the protein has at least 3 conformational states: pre-fusion native state, pre-hairpin intermediate state, and post-fusion hairpin state. During viral and plasma cell membrane fusion, the heptad repeat (HR) regions assume a trimer-of-hairpins structure, positioning the fusion peptide in close proximity to the C-terminal region of the ectodomain. The formation of this structure appears to drive apposition and subsequent fusion of viral and plasma cell membranes. Directs fusion of viral and cellular membranes leading to delivery of the nucleocapsid into the cytoplasm. This fusion is pH independent and occurs directly at the outer cell membrane. The trimer of F1-F2 (F protein) probably interacts with H at the virion surface. Upon HN binding to its cellular receptor, the hydrophobic fusion peptide is unmasked and interacts with the cellular membrane, inducing the fusion between cell and virion membranes. Later in infection, F proteins expressed at the plasma membrane of infected cells could mediate fusion with adjacent cells to form syncytia, a cytopathic effect that could lead to tissue necrosis. The sequence is that of Fusion glycoprotein F0 (F) from Canine distemper virus (strain Onderstepoort) (CDV).